The chain runs to 31 residues: ECGTLFSGCSTHADCCEGFICKLWCRYERTW.

Disulfide bonds link C2–C16, C9–C21, and C15–C25. Residue W31 is modified to Tryptophan amide.

In terms of tissue distribution, expressed by the venom gland.

It localises to the secreted. In terms of biological role, blocks transient outward voltage-gated potassium channels in rat ventricular myocytes (thus prolonging action-potential duration) and rat Kv4.2/KCNA4 channels expressed in Xenopus oocytes. Is also a weak blocker of calcium channels in rat cerebellar granule cells. The chain is Kappa-sparatoxin-Hv1c from Heteropoda venatoria (Brown huntsman spider).